Consider the following 148-residue polypeptide: Globin-3 (148 aa).

The Globin domain occupies 2–148; sequence TLTKHEQDIL…HVFPMMAAEI (147 aa). Histidine 99 contacts heme.

It belongs to the globin family. As to quaternary structure, monomer.

In terms of biological role, oxygen binding protein. This is Globin-3 from Paramphistomum epiclitum.